Here is a 273-residue protein sequence, read N- to C-terminus: Hydroxynaphthalene reductase arp2 (273 aa).

NADP(+) contacts are provided by Ile-24, Asp-70, Asn-97, and Arg-130. Catalysis depends on proton donor residues Ser-146 and Ser-147. NADP(+)-binding residues include Tyr-160, Lys-164, Val-193, and Ser-195. Tyr-160 (proton acceptor) is an active-site residue. Lys-164 (lowers pKa of active site Tyr) is an active-site residue.

It belongs to the short-chain dehydrogenases/reductases (SDR) family.

The protein resides in the endosome. It participates in pigment biosynthesis; melanin biosynthesis. With respect to regulation, tricyclazole and pyroquilon inhibit arp2 hydroxynaphtalene reductase activity. In terms of biological role, hydroxynaphthalene reductase; part of the gene cluster that mediates the biosynthesis of dihydroxynaphthalene (DHN)-melanin, a bluish-green pigment and a structural component of the conidial wall. The first step of the pathway is the production of the heptaketide naphtopyrone YWA1 by the polyketide synthase alb1 though condensation of acetyl-CoA with malonyl-CoA. The naphtopyrone YWA1 is then converted to the pentaketide 1,3,6,8-tetrahydroxynaphthalene (1,3,6,8-THN) by the heptaketide hydrolyase ayg1 though chain-length shortening. 1,3,6,8-THN is substrate of the hydroxynaphthalene reductase arp2 to yield scytalone. The scytalone dehydratase arp1 then reduces scytalone to 1,3,8-THN. 1,3,8-THN is also substrate of the hydroxynaphthalene reductase arp2 to yield vermelone. Vermelone is further converted by the multicopper oxidase abr1 to 1,8-DHN. Finally the laccase abr2 transforms 1,8-DHN to DHN-melanin. DHN-melanin biosynthesis appears to be initiated in endosomes where early enzymes (abl1, ayg1, arp1 and arp2) localize, with exocytosis leading to melanin deposition on the cell surface where late enzymes (abr1 and abr2) localize. DHN-melanin is an important structural component of the outer cell wall and is required for the presence of conidial surface hydrophobins. DHN-melanin also plays a crucial role in fungal virulence, including a protective role against the host's immune defenses. DHN-melanin also protects conidia against amoeba predation. In Aspergillus fumigatus (strain ATCC MYA-4609 / CBS 101355 / FGSC A1100 / Af293) (Neosartorya fumigata), this protein is Hydroxynaphthalene reductase arp2.